Reading from the N-terminus, the 244-residue chain is Protein pendolino (244 aa).

Positions 20–176 (QQEYKILAEY…VQENIKESKE (157 aa)) constitute a UBC core domain.

This sequence belongs to the ubiquitin-conjugating enzyme family. FTS subfamily. In terms of assembly, interacts (via N-terminus) with cav/HOAP (via N-terminus); the interaction is direct. Probably interacts (via N-terminus and UBC domain) with ver and moi.

It localises to the nucleus. The protein localises to the nucleolus. It is found in the chromosome. In terms of biological role, required for efficient DNA replication, probably through involvement in telomere replication. May have a role in telomere capping of heterochromatic chromosome ends. In Drosophila melanogaster (Fruit fly), this protein is Protein pendolino.